Reading from the N-terminus, the 261-residue chain is DNA repair protein RecO (261 aa).

The protein belongs to the RecO family.

Its function is as follows. Involved in DNA repair and RecF pathway recombination. The protein is DNA repair protein RecO of Gloeobacter violaceus (strain ATCC 29082 / PCC 7421).